Reading from the N-terminus, the 290-residue chain is 4-hydroxybenzoate octaprenyltransferase (290 aa).

Transmembrane regions (helical) follow at residues 23–43 (IGTELVFWPTMWALWIASDGY), 46–66 (LKMFVVMTLGVLFMRAAGCAI), 96–116 (AIWVFLALVAASAALLLFLPI), 118–138 (TFYWSFGALFLAFIYPFMKRY), 141–161 (LPQVFLGAAFSWAIPMAYTAT), 169–189 (CWLLYFGNLAWTVAYDTQYAI), 212–232 (IPIISTLQLSSLLLIGMALYI), 235–255 (LLFPWGIIGLVVVAVDFIYQW), and 265–285 (LCFWAFRHNRWVGLIIFLAIL).

Belongs to the UbiA prenyltransferase family. It depends on Mg(2+) as a cofactor.

The protein localises to the cell inner membrane. It carries out the reaction all-trans-octaprenyl diphosphate + 4-hydroxybenzoate = 4-hydroxy-3-(all-trans-octaprenyl)benzoate + diphosphate. It participates in cofactor biosynthesis; ubiquinone biosynthesis. In terms of biological role, catalyzes the prenylation of para-hydroxybenzoate (PHB) with an all-trans polyprenyl group. Mediates the second step in the final reaction sequence of ubiquinone-8 (UQ-8) biosynthesis, which is the condensation of the polyisoprenoid side chain with PHB, generating the first membrane-bound Q intermediate 3-octaprenyl-4-hydroxybenzoate. The sequence is that of 4-hydroxybenzoate octaprenyltransferase from Acinetobacter baylyi (strain ATCC 33305 / BD413 / ADP1).